The sequence spans 89 residues: Small ribosomal subunit protein bS20 (89 aa).

The disordered stretch occupies residues 1-28; sequence MTLANIKSAKKRAIQSEKRRQHNASQRS.

The protein belongs to the bacterial ribosomal protein bS20 family.

Binds directly to 16S ribosomal RNA. The protein is Small ribosomal subunit protein bS20 of Pasteurella multocida (strain Pm70).